Here is a 545-residue protein sequence, read N- to C-terminus: Membrane protein insertase YidC (545 aa).

Transmembrane regions (helical) follow at residues 350–370 (IIGN…AVLY), 424–444 (LPML…FASV), 461–481 (ADPY…QTYL), and 498–518 (PLVF…YWVV).

It belongs to the OXA1/ALB3/YidC family. Type 1 subfamily. In terms of assembly, interacts with the Sec translocase complex via SecD. Specifically interacts with transmembrane segments of nascent integral membrane proteins during membrane integration.

It localises to the cell inner membrane. In terms of biological role, required for the insertion and/or proper folding and/or complex formation of integral membrane proteins into the membrane. Involved in integration of membrane proteins that insert both dependently and independently of the Sec translocase complex, as well as at least some lipoproteins. Aids folding of multispanning membrane proteins. The chain is Membrane protein insertase YidC from Neisseria gonorrhoeae (strain NCCP11945).